Consider the following 2144-residue polypeptide: Alpha-protein kinase 2 (2144 aa).

One can recognise an Ig-like 1 domain in the interval proline 7–glutamine 105. Cysteines 33 and 98 form a disulfide. Disordered stretches follow at residues glutamate 425–methionine 473, serine 500–glycine 575, glutamate 727–serine 775, glutamine 845–serine 864, glutamate 881–tyrosine 907, serine 1011–glutamine 1065, aspartate 1316–methionine 1340, glycine 1471–valine 1509, cysteine 1565–asparagine 1587, glutamate 1629–histidine 1696, and glutamate 1720–alanine 1754. Residues serine 500 to proline 511 are compositionally biased toward basic and acidic residues. The span at arginine 853–serine 864 shows a compositional bias: basic and acidic residues. The segment covering proline 897–proline 906 has biased composition (polar residues). A compositionally biased stretch (polar residues) spans aspartate 1574–asparagine 1587. Composition is skewed to basic and acidic residues over residues glutamate 1631–cysteine 1645 and proline 1732–alanine 1754. An Ig-like 2 domain is found at proline 1759–threonine 1847. A disulfide bond links cysteine 1781 and cysteine 1831. The 233-residue stretch at lysine 1874 to leucine 2106 folds into the Alpha-type protein kinase domain. The tract at residues asparagine 2109–threonine 2144 is disordered.

Belongs to the protein kinase superfamily. Alpha-type protein kinase family. ALPK subfamily.

Its subcellular location is the basolateral cell membrane. It catalyses the reaction L-seryl-[protein] + ATP = O-phospho-L-seryl-[protein] + ADP + H(+). The enzyme catalyses L-threonyl-[protein] + ATP = O-phospho-L-threonyl-[protein] + ADP + H(+). In terms of biological role, protein kinase that recognizes phosphorylation sites in which the surrounding peptides have an alpha-helical conformation. Regulates cardiac development and cardiomyocyte differentiation by negatively regulating Wnt/beta-catenin signaling. This Mus musculus (Mouse) protein is Alpha-protein kinase 2.